We begin with the raw amino-acid sequence, 159 residues long: Ribosomal RNA large subunit methyltransferase H (159 aa).

S-adenosyl-L-methionine-binding positions include leucine 76, glycine 108, and 127 to 132; that span reads FSPMTF.

Belongs to the RNA methyltransferase RlmH family. In terms of assembly, homodimer.

Its subcellular location is the cytoplasm. The enzyme catalyses pseudouridine(1915) in 23S rRNA + S-adenosyl-L-methionine = N(3)-methylpseudouridine(1915) in 23S rRNA + S-adenosyl-L-homocysteine + H(+). Specifically methylates the pseudouridine at position 1915 (m3Psi1915) in 23S rRNA. The protein is Ribosomal RNA large subunit methyltransferase H of Alkaliphilus oremlandii (strain OhILAs) (Clostridium oremlandii (strain OhILAs)).